The following is a 121-amino-acid chain: Large ribosomal subunit protein eL34B (121 aa).

Belongs to the eukaryotic ribosomal protein eL34 family. As to quaternary structure, component of the large ribosomal subunit (LSU). Mature yeast ribosomes consist of a small (40S) and a large (60S) subunit. The 40S small subunit contains 1 molecule of ribosomal RNA (18S rRNA) and 33 different proteins (encoded by 57 genes). The large 60S subunit contains 3 rRNA molecules (25S, 5.8S and 5S rRNA) and 46 different proteins (encoded by 81 genes).

It is found in the cytoplasm. In terms of biological role, component of the ribosome, a large ribonucleoprotein complex responsible for the synthesis of proteins in the cell. The small ribosomal subunit (SSU) binds messenger RNAs (mRNAs) and translates the encoded message by selecting cognate aminoacyl-transfer RNA (tRNA) molecules. The large subunit (LSU) contains the ribosomal catalytic site termed the peptidyl transferase center (PTC), which catalyzes the formation of peptide bonds, thereby polymerizing the amino acids delivered by tRNAs into a polypeptide chain. The nascent polypeptides leave the ribosome through a tunnel in the LSU and interact with protein factors that function in enzymatic processing, targeting, and the membrane insertion of nascent chains at the exit of the ribosomal tunnel. In Saccharomyces cerevisiae (strain ATCC 204508 / S288c) (Baker's yeast), this protein is Large ribosomal subunit protein eL34B.